The primary structure comprises 358 residues: Variant-surface-glycoprotein phospholipase C (358 aa).

Residues 25–198 form the PI-PLC X-box domain; the sequence is IGQVYMVGAH…STRRIFLVVR (174 aa).

Monomer. In terms of processing, the N-terminus is blocked.

Its subcellular location is the membrane. It catalyses the reaction a 6-(alpha-D-glucosaminyl)-1-(1,2-diacyl-sn-glycero-3-phospho)-1D-myo-inositol = 6-(alpha-D-glucosaminyl)-1D-myo-inositol 1,2-cyclic phosphate + a 1,2-diacyl-sn-glycerol. By hydrolysis of the attached glycolipid, releases soluble variant surface glycoprotein containing phosphoinositol from the cell wall of T.brucei after cell lysis. It also cleaves similar membrane anchors on some mammalian proteins. VSG lipase may play a role in processes such as parasite differentiation or antigenic variation. In Trypanosoma brucei brucei, this protein is Variant-surface-glycoprotein phospholipase C.